Reading from the N-terminus, the 465-residue chain is Glutamate--tRNA ligase (465 aa).

The 'HIGH' region motif lies at 8 to 18 (PSPTGDLHIGG). Residues 235–239 (RLSKR) carry the 'KMSKS' region motif. Lys238 serves as a coordination point for ATP.

The protein belongs to the class-I aminoacyl-tRNA synthetase family. Glutamate--tRNA ligase type 1 subfamily. As to quaternary structure, monomer.

The protein resides in the cytoplasm. It carries out the reaction tRNA(Glu) + L-glutamate + ATP = L-glutamyl-tRNA(Glu) + AMP + diphosphate. Catalyzes the attachment of glutamate to tRNA(Glu) in a two-step reaction: glutamate is first activated by ATP to form Glu-AMP and then transferred to the acceptor end of tRNA(Glu). In Dichelobacter nodosus (strain VCS1703A), this protein is Glutamate--tRNA ligase.